Consider the following 110-residue polypeptide: UPF0060 membrane protein Psyc_0916 (110 aa).

4 helical membrane passes run 7 to 27 (VGLF…PYLW), 33 to 53 (SIWL…LLSL), 63 to 83 (AAYG…VNGI), and 87 to 107 (TWDI…MFAP).

Belongs to the UPF0060 family.

Its subcellular location is the cell inner membrane. This is UPF0060 membrane protein Psyc_0916 from Psychrobacter arcticus (strain DSM 17307 / VKM B-2377 / 273-4).